Consider the following 523-residue polypeptide: Putative oxidoreductase TDA3 (523 aa).

Positions 157 to 172 (NSSLSSSGSSLKNDSA) are enriched in low complexity. The tract at residues 157 to 189 (NSSLSSSGSSLKNDSASNEEEGSDIHVSSSVPS) is disordered. Serine 189, serine 204, and serine 306 each carry phosphoserine.

This sequence belongs to the TDA3 family. As to quaternary structure, interacts with BTN2.

Its subcellular location is the cytoplasm. It localises to the late endosome. Putative oxidoreductase that negatively regulates the retrieval of cargo from late endosomes to the Golgi. Regulates YIF1 and KEX2 localization. Required for fast DNA replication. The sequence is that of Putative oxidoreductase TDA3 (TDA3) from Saccharomyces cerevisiae (strain ATCC 204508 / S288c) (Baker's yeast).